Here is a 206-residue protein sequence, read N- to C-terminus: Type III pantothenate kinase (206 aa).

An ATP-binding site is contributed by 5–12; it reads DIGNTFLH. Substrate is bound by residues Tyr69 and 73 to 76; that span reads GVDR. Asp75 (proton acceptor) is an active-site residue. Asp90 contacts K(+). Residue Ser93 participates in ATP binding. Residue Thr145 coordinates substrate.

The protein belongs to the type III pantothenate kinase family. In terms of assembly, homodimer. The cofactor is NH4(+). K(+) serves as cofactor.

Its subcellular location is the cytoplasm. It carries out the reaction (R)-pantothenate + ATP = (R)-4'-phosphopantothenate + ADP + H(+). It functions in the pathway cofactor biosynthesis; coenzyme A biosynthesis; CoA from (R)-pantothenate: step 1/5. Functionally, catalyzes the phosphorylation of pantothenate (Pan), the first step in CoA biosynthesis. The polypeptide is Type III pantothenate kinase (Helicobacter hepaticus (strain ATCC 51449 / 3B1)).